A 362-amino-acid polypeptide reads, in one-letter code: 3-isopropylmalate dehydrogenase (362 aa).

Residue 78 to 91 participates in NAD(+) binding; the sequence is GPKWEHLAPNDQPE. Residues R99, R109, R138, and D227 each coordinate substrate. The Mg(2+) site is built by D227, D251, and D255. Position 285–297 (285–297) interacts with NAD(+); the sequence is GSAPDIAGKNIAN.

The protein belongs to the isocitrate and isopropylmalate dehydrogenases family. LeuB type 1 subfamily. As to quaternary structure, homodimer. Mg(2+) serves as cofactor. It depends on Mn(2+) as a cofactor.

It is found in the cytoplasm. The enzyme catalyses (2R,3S)-3-isopropylmalate + NAD(+) = 4-methyl-2-oxopentanoate + CO2 + NADH. The protein operates within amino-acid biosynthesis; L-leucine biosynthesis; L-leucine from 3-methyl-2-oxobutanoate: step 3/4. In terms of biological role, catalyzes the oxidation of 3-carboxy-2-hydroxy-4-methylpentanoate (3-isopropylmalate) to 3-carboxy-4-methyl-2-oxopentanoate. The product decarboxylates to 4-methyl-2 oxopentanoate. This Photobacterium profundum (strain SS9) protein is 3-isopropylmalate dehydrogenase.